Here is a 413-residue protein sequence, read N- to C-terminus: Gamma-glutamyl phosphate reductase (413 aa).

This sequence belongs to the gamma-glutamyl phosphate reductase family.

It is found in the cytoplasm. It catalyses the reaction L-glutamate 5-semialdehyde + phosphate + NADP(+) = L-glutamyl 5-phosphate + NADPH + H(+). The protein operates within amino-acid biosynthesis; L-proline biosynthesis; L-glutamate 5-semialdehyde from L-glutamate: step 2/2. Functionally, catalyzes the NADPH-dependent reduction of L-glutamate 5-phosphate into L-glutamate 5-semialdehyde and phosphate. The product spontaneously undergoes cyclization to form 1-pyrroline-5-carboxylate. This Caulobacter vibrioides (strain ATCC 19089 / CIP 103742 / CB 15) (Caulobacter crescentus) protein is Gamma-glutamyl phosphate reductase.